The following is a 304-amino-acid chain: tRNA pseudouridine synthase B (304 aa).

The active-site Nucleophile is Asp48.

This sequence belongs to the pseudouridine synthase TruB family. Type 1 subfamily.

The enzyme catalyses uridine(55) in tRNA = pseudouridine(55) in tRNA. Responsible for synthesis of pseudouridine from uracil-55 in the psi GC loop of transfer RNAs. This Pseudomonas paraeruginosa (strain DSM 24068 / PA7) (Pseudomonas aeruginosa (strain PA7)) protein is tRNA pseudouridine synthase B.